A 406-amino-acid polypeptide reads, in one-letter code: Argininosuccinate synthase (406 aa).

8 to 16 (AYSGGLDTS) contacts ATP. Y86 lines the L-citrulline pocket. Residue G116 coordinates ATP. Residues T118, N122, and D123 each coordinate L-aspartate. N122 provides a ligand contact to L-citrulline. Residues R126, S174, S183, E259, and Y271 each coordinate L-citrulline.

This sequence belongs to the argininosuccinate synthase family. Type 1 subfamily. Homotetramer.

Its subcellular location is the cytoplasm. It catalyses the reaction L-citrulline + L-aspartate + ATP = 2-(N(omega)-L-arginino)succinate + AMP + diphosphate + H(+). Its pathway is amino-acid biosynthesis; L-arginine biosynthesis; L-arginine from L-ornithine and carbamoyl phosphate: step 2/3. The sequence is that of Argininosuccinate synthase from Dehalococcoides mccartyi (strain ATCC BAA-2100 / JCM 16839 / KCTC 5957 / BAV1).